The following is a 639-amino-acid chain: Bucky ball (639 aa).

The span at 178–187 (ATKECKEDPV) shows a compositional bias: basic and acidic residues. 3 disordered regions span residues 178-205 (ATKECKEDPVTRPTTYSDSAYDAESSQG), 218-242 (LDSSSVHEEEEEEEKDVNEEDEPQT), and 581-614 (RSWRQVTGPQDQGRTPLRRSTCKSIHQQRPRSEY). The span at 189–205 (RPTTYSDSAYDAESSQG) shows a compositional bias: polar residues. The span at 225–240 (EEEEEEEKDVNEEDEP) shows a compositional bias: acidic residues. A compositionally biased stretch (polar residues) spans 584–593 (RQVTGPQDQG). Over residues 596-609 (PLRRSTCKSIHQQR) the composition is skewed to basic residues. A symmetric dimethylarginine mark is found at Arg-627 and Arg-629. 3 short sequence motifs (RG Motif) span residues 627–628 (RG), 629–630 (RG), and 635–636 (RG).

In terms of assembly, specifically interacts (when methylated) with tdrd6 (via Tudor domain); interaction is responsible for recruitment of different protein complexes to germ plasm. Interacts with rbpms2 and dazl; interaction mediates Balbiani body formation. Interacts with kif5ba; interaction leads to buc enrichment at the embryonic cleavage furrows and mediates dorsoventral patterning. In terms of processing, symmetric dimethylarginine modification promotes interaction with tdrd6.

It localises to the cytoplasm. It is found in the cleavage furrow. Functionally, prion-like protein required for the formation of Balbiani body (electron-dense aggregates in the oocyte) and germ plasm assembly, and for the establishment of oocyte polarity during early oogenesis. Mobility and aggregation properties are improved by tudor domain-containing protein tdrd6 through interaction with dimethylated arginines Tri-RG domains. Establishes oocyte polarity through interactions with RNA-binding proteins rbpms2 and dazl, initiating a positive feedback loop amplification mechanism in the Balbiani body. Interaction of BUC protein and mRNA with rbpms2 and dazl is required to mediate Balbiani body formation. Involved in recruitment of germ plasm to embryonic cleavage furrows and dorsoventral patterning through interaction with Kinesin-1/KIF5BA. In Danio rerio (Zebrafish), this protein is Bucky ball.